The primary structure comprises 387 residues: MAMAEMATKSSLSAKLTLPSSSTKKTLSLRQVSVSLPTSTSISLLSLFASPPHEAKAAVSIPKDQIVSSLTEVEKTINQVQETGSSVFDATQRVFQVVGDALKPALDTALPIAKQAGEEAMKLASPAFSEASKKAQEAMQSSGFDSEPVFNAAKTVTDVAQQTSKAIEDAKPIASSTMDTISSADPSVIVVAAGAAFLAYLLLPPVFSAISFNFRGYKGDLTPAQTLDLLCTKNYLMVDIRSEKDKEKAGIPRLPSNAKNRVISIPLEELPNKVKGIVRNSKRVEAEIAALKISYLKKINKGSNIIILDSYTDSAKIVAKTLKVLGYKNCYIVTDGFSGGRGWLQSRLGTDSYNFSFAQVLSPSRIIPAASRSFGTRSGTKFLPSSD.

A chloroplast-targeting transit peptide spans 1–33 (MAMAEMATKSSLSAKLTLPSSSTKKTLSLRQVS). Residues 34-186 (VSLPTSTSIS…TMDTISSADP (153 aa)) lie on the Lumenal, thylakoid side of the membrane. The helical transmembrane segment at 187-207 (SVIVVAAGAAFLAYLLLPPVF) threads the bilayer. The Stromal portion of the chain corresponds to 208–387 (SAISFNFRGY…SGTKFLPSSD (180 aa)). A Rhodanese domain is found at 231–352 (CTKNYLMVDI…WLQSRLGTDS (122 aa)). Threonine 380 carries the post-translational modification Phosphothreonine.

In terms of processing, phosphorylation seems to be light-dependent. Predominantly expressed in the shoot, including guard cells.

The protein resides in the plastid. It localises to the chloroplast thylakoid membrane. Modulates cytoplasmic Ca(2+) concentration and is crucial for proper stomatal regulation in response to elevated levels of external Ca(2+). May function by regulating concentrations of inositol 1,4,5-trisphosphate (IP3), which in turn triggers release of Ca(2+) from internal stores. May play a role in de-etiolation. The polypeptide is Calcium sensing receptor, chloroplastic (CAS) (Arabidopsis thaliana (Mouse-ear cress)).